Reading from the N-terminus, the 373-residue chain is Protein phosphatase 1K, mitochondrial (373 aa).

Residues K95–F347 form the PPM-type phosphatase domain. Residues D128, G129, and D338 each coordinate Mg(2+).

It belongs to the PP2C family. The cofactor is Mg(2+). Mn(2+) serves as cofactor.

The protein resides in the mitochondrion matrix. It catalyses the reaction O-phospho-L-seryl-[protein] + H2O = L-seryl-[protein] + phosphate. It carries out the reaction O-phospho-L-threonyl-[protein] + H2O = L-threonyl-[protein] + phosphate. The chain is Protein phosphatase 1K, mitochondrial (ppm1k) from Xenopus laevis (African clawed frog).